The primary structure comprises 157 residues: Protein Smg (157 aa).

This sequence belongs to the Smg family.

This is Protein Smg from Sodalis glossinidius (strain morsitans).